A 515-amino-acid chain; its full sequence is ATP synthase subunit alpha (515 aa).

Residue 171–178 participates in ATP binding; it reads GDRQTGKT.

The protein belongs to the ATPase alpha/beta chains family. In terms of assembly, F-type ATPases have 2 components, CF(1) - the catalytic core - and CF(0) - the membrane proton channel. CF(1) has five subunits: alpha(3), beta(3), gamma(1), delta(1), epsilon(1). CF(0) has three main subunits: a(1), b(2) and c(9-12). The alpha and beta chains form an alternating ring which encloses part of the gamma chain. CF(1) is attached to CF(0) by a central stalk formed by the gamma and epsilon chains, while a peripheral stalk is formed by the delta and b chains.

It localises to the cell inner membrane. The enzyme catalyses ATP + H2O + 4 H(+)(in) = ADP + phosphate + 5 H(+)(out). Its function is as follows. Produces ATP from ADP in the presence of a proton gradient across the membrane. The alpha chain is a regulatory subunit. The sequence is that of ATP synthase subunit alpha from Xanthomonas axonopodis pv. citri (strain 306).